We begin with the raw amino-acid sequence, 323 residues long: Putative dTDP-D-glucose 4,6-dehydratase (323 aa).

Thr-124 is a binding site for substrate. Residue Asp-125 is the Proton donor of the active site. Residues Glu-126 and Tyr-149 each act as proton acceptor in the active site.

This sequence belongs to the NAD(P)-dependent epimerase/dehydratase family. dTDP-glucose dehydratase subfamily. It depends on NAD(+) as a cofactor.

It catalyses the reaction dTDP-alpha-D-glucose = dTDP-4-dehydro-6-deoxy-alpha-D-glucose + H2O. The polypeptide is Putative dTDP-D-glucose 4,6-dehydratase (Acanthamoeba polyphaga mimivirus (APMV)).